We begin with the raw amino-acid sequence, 134 residues long: Small ribosomal subunit protein uS11 (134 aa).

It belongs to the universal ribosomal protein uS11 family. As to quaternary structure, part of the 30S ribosomal subunit. Interacts with proteins S7 and S18. Binds to IF-3.

Functionally, located on the platform of the 30S subunit, it bridges several disparate RNA helices of the 16S rRNA. Forms part of the Shine-Dalgarno cleft in the 70S ribosome. In Salinibacter ruber (strain DSM 13855 / M31), this protein is Small ribosomal subunit protein uS11.